The sequence spans 437 residues: Adenylosuccinate synthetase (437 aa).

Residues Gly-12–Lys-18 and Gly-40–Thr-42 contribute to the GTP site. Catalysis depends on Asp-13, which acts as the Proton acceptor. Asp-13 and Gly-40 together coordinate Mg(2+). Residues Asp-13–Lys-16, Asn-38–His-41, Thr-131, Arg-145, Gln-225, and Thr-240 each bind IMP. The Proton donor role is filled by His-41. Positions Thr-281–Phe-304 are disordered. Residues Gly-288–Glu-303 are compositionally biased toward basic and acidic residues. Thr-306–Arg-312 is a substrate binding site. Arg-310 lines the IMP pocket. Residues Arg-312, Lys-338–Asp-340, and Ser-420–Ser-422 contribute to the GTP site.

Belongs to the adenylosuccinate synthetase family. As to quaternary structure, homodimer. It depends on Mg(2+) as a cofactor.

It is found in the cytoplasm. It catalyses the reaction IMP + L-aspartate + GTP = N(6)-(1,2-dicarboxyethyl)-AMP + GDP + phosphate + 2 H(+). It participates in purine metabolism; AMP biosynthesis via de novo pathway; AMP from IMP: step 1/2. Functionally, plays an important role in the de novo pathway of purine nucleotide biosynthesis. Catalyzes the first committed step in the biosynthesis of AMP from IMP. The chain is Adenylosuccinate synthetase from Ruegeria sp. (strain TM1040) (Silicibacter sp.).